We begin with the raw amino-acid sequence, 99 residues long: Cell division protein FtsB (99 aa).

The Cytoplasmic segment spans residues M1–F3. The chain crosses the membrane as a helical span at residues F4 to S21. Residues G22 to Q99 lie on the Periplasmic side of the membrane. The stretch at I36–N73 forms a coiled coil.

It belongs to the FtsB family. Part of a complex composed of FtsB, FtsL and FtsQ.

It is found in the cell inner membrane. Functionally, essential cell division protein. May link together the upstream cell division proteins, which are predominantly cytoplasmic, with the downstream cell division proteins, which are predominantly periplasmic. In Shewanella sp. (strain W3-18-1), this protein is Cell division protein FtsB.